We begin with the raw amino-acid sequence, 1158 residues long: MKLKELEKPAVQAWSPARQYPVYLATGTSAQQLDASFSTNATLEIFEIDFRDPSLDLKHKGILSVSSRFHKLIWGSFGSGLLENSGVIAGGGDNGTLTLYNVTHVLSSGKEPLIAQKQKHTGAVRALDFNPFQGNLLASGASDSEIFIWDLNHLSVPMTPGPKSQNPPEDIKALSWNLQVQHILASAHPSGKAVVWDLRKNEPIIKVSSHSSRMNCSGLAWNPDIATQLVLCSEDDQLPVIQLWDLRFASSPLKVLESHSRGILSMSWNQADAELLLSTAKDSQIFCWNLSSSEVVYKLPTQSSWCFDVQWCPQSPPVFSAVSFDGWISLCSVMGRSWEAQHMRQADKVPEQVAQASLIPPLKKPPKWMRRPAGGSFAFGGKLVTFGLPSIPVQPVAQACSRPVFISQVITESEVLTRSVVLQEALGSGNLLNYCQSKVQQASLPCEKILWQFLKVTLEQDSRPKFLGLLGYSREELQKKVDTCLKSDSKSQESPQLEAVDLKSDRAHSPCAQASKHTAKEASESSAFFDELIPQNMTPWEIPTTEDTDGLLSQALLLGELRSAVELCLKEERFADAIILAQAGDAELLKWTQERYLAKRRTKTSSLLACVVKKNWKDLVCACRLKNWREALALLLTYSGPEKFPELCDMLGTRMEQEGGRALTSEARLCYVCSGSVERLVESWAKFQQASSPMALQELMEQVTVLSRSLELLQGSNKMSPGPATTHRLTQYANLLAAQGSLATAMSFLPSDCIQPGVQQLRDRLFHAQGSAVLGQQAPAFPFPRVAVGAALHSKETSSYRRGLQPPQQVPAPSVRPRTTAQPSSVMPFSPSQPSPSQGSSDHRVLRPQAILPGHFVPGVRPALSPPQLSGGQSVPAVNPAGFCGAWPLPGPTPVMASPDFMQPGSTHLPETPRLLPLPPVGPPGPNPLSSQLPASPVTFSVAPPPGGPRAPCSSALPSSGILATCPGPQDSWKVSPASQGNLQRKKLPETFMPPAPITAPLRSLGPEPQQALLPQPLVSSATLPPPGAPRECSLQQLQPLPPERTEKELPPEHQCVKDSFEALLQRCSLTATDLKTKRKLEEAARRLECLYEKLCEGTLSPHVLAGLHEVARCVDAGSFEQGLAVHAQVAGCSSFSEVSSFMPMLKAVLTIAHKLQG.

WD repeat units follow at residues 4 to 47 (KELE…EIFE), 65 to 110 (VSSR…SSGK), 119 to 159 (KHTG…VPMT), 166 to 206 (NPPE…PIIK), 209 to 254 (SHSS…SPLK), 258 to 298 (SHSR…VVYK), and 301 to 341 (TQSS…WEAQ). A WD 8; interaction with SEC13 repeat occupies 376–407 (SFAFGGKLVTFGLPSIPVQPVAQACSRPVFIS). Disordered regions lie at residues 485 to 520 (LKSDSKSQESPQLEAVDLKSDRAHSPCAQASKHTAK), 797 to 843 (TSSY…SSDH), and 968 to 1010 (GPQD…PEPQ). Positions 822 to 840 (QPSSVMPFSPSQPSPSQGS) are enriched in low complexity.

Belongs to the WD repeat SEC31 family. As to quaternary structure, COPII is composed of at least 5 proteins: the SEC23/24 complex, the SEC13/31 complex and SAR1. SEC13 and SEC31 make a 2:2 tetramer that forms the edge element of the COPII outer coat. The tetramer self-assembles in multiple copies to form the complete polyhedral cage. Interacts (via WD 8) with SEC13. Interacts with SEC31A. Post-translationally, monoubiquitinated by the BCR(KLHL12) E3 ubiquitin ligase complex, leading to regulate the size of COPII coats.

It is found in the cytoplasm. Its subcellular location is the cytoplasmic vesicle. The protein localises to the COPII-coated vesicle membrane. It localises to the endoplasmic reticulum membrane. Functionally, as a component of the coat protein complex II (COPII), may function in vesicle budding and cargo export from the endoplasmic reticulum. The chain is Protein transport protein Sec31B (Sec31b) from Mus musculus (Mouse).